The primary structure comprises 161 residues: Long arms of the bivalent protein 1 (161 aa).

Positions 72–75 (KVIW) match the PP1 binding motif motif. The tract at residues 85–161 (GTMFEDFKED…SDKTMCSGQS (77 aa)) is disordered. Over residues 97-115 (QESVSSISNNEANWGSSVN) the composition is skewed to polar residues. The span at 120 to 129 (NYEKMQKEET) shows a compositional bias: basic and acidic residues. Residues 130–151 (FDPYDSDSDTSEDSDFDEDFED) are compositionally biased toward acidic residues.

In terms of assembly, interacts with gsp-1 and gsp-2; the interaction is direct.

The protein resides in the chromosome. Its subcellular location is the nucleus. In terms of biological role, involved in sister chromatid cohesion during mitosis and meiosis. In association with the gsp-2 phosphatase, it both restricts the localization and antagonizes the function of the air-2 kinase during meiosis I and mitosis to promote chromatid cohesion and spindle attachment. This in turn, drives germ cell immortality. Furthermore, may play a role in ensuring the timely assembly of the synaptonemal complex during prophase I of meiosis. The polypeptide is Long arms of the bivalent protein 1 (Caenorhabditis elegans).